Consider the following 525-residue polypeptide: MAGLQLAPHLPVGVMFPHNKTEAHGLHSAKHDPYEQSDSPQRSSMGHLRTSFQQKLWSNTELEQEDVISTHPKRNICTKARRHSCPHSAGISQQGSGNNAQGQGKGLFYLSSPTPRYPKANDQDFIPFRKKRVGVDRAYPLKPMVHRKSHSTSETGIDGDQNGYPRLPDSSEFSDSSFGLRSWVNPSLLASPQAEKVMAQLHRTEWTQIQRLEAAGESLQKEIRRKEILLREKLKKTEEGLRRIQREKKQAIFQEDRELQRMVLPRRRVRDGDLDTTHNSCLSPELRSEVFSRNRGEDQTCEQAQENSSPLQLSDYEIQRLKRERLMVSNNKIRDRDSGPSAGTFSQPAEDLGDELQASSLSGTPGSSGSSSSTEEQELGKCSHCGRSFLSLRLQRHSTVCGKMQGSKRKVFDSSRARAKGTELEQYLNWRGPATDKAEPPPRKSTWRQKHESFIRTLRHARQVQQVIARGGNPSDLPSILPAENPDYVQCPHCSRHFAPKVAERHIPKCKTIKNRPPPPRRHDS.

Residues 23–34 (AHGLHSAKHDPY) show a composition bias toward basic and acidic residues. 3 disordered regions span residues 23-48 (AHGLHSAKHDPYEQSDSPQRSSMGHL), 85-107 (CPHSAGISQQGSGNNAQGQGKGL), and 145-171 (VHRKSHSTSETGIDGDQNGYPRLPDSS). The segment covering 36-48 (QSDSPQRSSMGHL) has biased composition (polar residues). The span at 90-102 (GISQQGSGNNAQG) shows a compositional bias: low complexity. The stretch at 207 to 252 (TQIQRLEAAGESLQKEIRRKEILLREKLKKTEEGLRRIQREKKQAI) forms a coiled coil. Disordered regions lie at residues 292–316 (SRNRGEDQTCEQAQENSSPLQLSDY), 330–349 (NNKIRDRDSGPSAGTFSQPA), and 356–379 (LQASSLSGTPGSSGSSSSTEEQEL). Over residues 301 to 312 (CEQAQENSSPLQ) the composition is skewed to polar residues. Over residues 359-373 (SSLSGTPGSSGSSSS) the composition is skewed to low complexity. C2HC/C3H-type zinc fingers lie at residues 378–407 (ELGKCSHCGRSFLSLRLQRHSTVCGKMQGS) and 487–516 (DYVQCPHCSRHFAPKVAERHIPKCKTIKNR). C382, C385, H397, C401, C491, C494, H506, and C510 together coordinate Zn(2+).

This sequence belongs to the ZC2HC1 family. It depends on Zn(2+) as a cofactor.

The chain is Zinc finger C2HC domain-containing protein 1C (Zc2hc1c) from Rattus norvegicus (Rat).